The sequence spans 315 residues: HPr kinase/phosphorylase (315 aa).

Residues histidine 140 and lysine 161 contribute to the active site. 155–162 (GDSGVGKS) is a binding site for ATP. Serine 162 serves as a coordination point for Mg(2+). Aspartate 179 serves as the catalytic Proton acceptor; for phosphorylation activity. Proton donor; for dephosphorylation activity. The tract at residues 203-212 (LEIRGIGIID) is important for the catalytic mechanism of both phosphorylation and dephosphorylation. Position 204 (glutamate 204) interacts with Mg(2+). Arginine 245 is a catalytic residue. Positions 266 to 271 (PVKTGR) are important for the catalytic mechanism of dephosphorylation.

It belongs to the HPrK/P family. As to quaternary structure, homohexamer. Requires Mg(2+) as cofactor.

The catalysed reaction is [HPr protein]-L-serine + ATP = [HPr protein]-O-phospho-L-serine + ADP + H(+). It carries out the reaction [HPr protein]-O-phospho-L-serine + phosphate + H(+) = [HPr protein]-L-serine + diphosphate. Functionally, catalyzes the ATP- as well as the pyrophosphate-dependent phosphorylation of a specific serine residue in HPr, a phosphocarrier protein of the phosphoenolpyruvate-dependent sugar phosphotransferase system (PTS). HprK/P also catalyzes the pyrophosphate-producing, inorganic phosphate-dependent dephosphorylation (phosphorolysis) of seryl-phosphorylated HPr (P-Ser-HPr). The two antagonistic activities of HprK/P are regulated by several intracellular metabolites, which change their concentration in response to the absence or presence of rapidly metabolisable carbon sources (glucose, fructose, etc.) in the growth medium. Therefore, by controlling the phosphorylation state of HPr, HPrK/P is a sensor enzyme that plays a major role in the regulation of carbon metabolism and sugar transport: it mediates carbon catabolite repression (CCR), and regulates PTS-catalyzed carbohydrate uptake and inducer exclusion. The sequence is that of HPr kinase/phosphorylase from Lactiplantibacillus plantarum (strain ATCC BAA-793 / NCIMB 8826 / WCFS1) (Lactobacillus plantarum).